The chain runs to 1065 residues: Carbamoyl phosphate synthase large chain (1065 aa).

Positions methionine 1–glutamate 401 are carboxyphosphate synthetic domain. Arginine 129, arginine 169, glycine 175, glycine 176, glutamine 208, valine 210, glutamate 215, glycine 241, valine 242, histidine 243, glutamine 284, and glutamate 298 together coordinate ATP. The ATP-grasp 1 domain occupies lysine 133 to valine 327. Glutamine 284, glutamate 298, and asparagine 300 together coordinate Mg(2+). Mn(2+) is bound by residues glutamine 284, glutamate 298, and asparagine 300. An oligomerization domain region spans residues glycine 402–asparagine 548. Residues glutamate 549–glycine 931 are carbamoyl phosphate synthetic domain. Residues serine 673–threonine 863 enclose the ATP-grasp 2 domain. The ATP site is built by arginine 709, lysine 748, isoleucine 750, glutamate 754, glycine 779, valine 780, histidine 781, serine 782, glutamine 822, and glutamate 834. Glutamine 822, glutamate 834, and asparagine 836 together coordinate Mg(2+). Positions 822, 834, and 836 each coordinate Mn(2+). The MGS-like domain maps to isoleucine 932–lysine 1065. The allosteric domain stretch occupies residues isoleucine 932–lysine 1065.

The protein belongs to the CarB family. As to quaternary structure, composed of two chains; the small (or glutamine) chain promotes the hydrolysis of glutamine to ammonia, which is used by the large (or ammonia) chain to synthesize carbamoyl phosphate. Tetramer of heterodimers (alpha,beta)4. The cofactor is Mg(2+). Mn(2+) is required as a cofactor.

It catalyses the reaction hydrogencarbonate + L-glutamine + 2 ATP + H2O = carbamoyl phosphate + L-glutamate + 2 ADP + phosphate + 2 H(+). It carries out the reaction hydrogencarbonate + NH4(+) + 2 ATP = carbamoyl phosphate + 2 ADP + phosphate + 2 H(+). The protein operates within amino-acid biosynthesis; L-arginine biosynthesis; carbamoyl phosphate from bicarbonate: step 1/1. Its pathway is pyrimidine metabolism; UMP biosynthesis via de novo pathway; (S)-dihydroorotate from bicarbonate: step 1/3. Functionally, large subunit of the glutamine-dependent carbamoyl phosphate synthetase (CPSase). CPSase catalyzes the formation of carbamoyl phosphate from the ammonia moiety of glutamine, carbonate, and phosphate donated by ATP, constituting the first step of 2 biosynthetic pathways, one leading to arginine and/or urea and the other to pyrimidine nucleotides. The large subunit (synthetase) binds the substrates ammonia (free or transferred from glutamine from the small subunit), hydrogencarbonate and ATP and carries out an ATP-coupled ligase reaction, activating hydrogencarbonate by forming carboxy phosphate which reacts with ammonia to form carbamoyl phosphate. The chain is Carbamoyl phosphate synthase large chain from Clostridium acetobutylicum (strain ATCC 824 / DSM 792 / JCM 1419 / IAM 19013 / LMG 5710 / NBRC 13948 / NRRL B-527 / VKM B-1787 / 2291 / W).